We begin with the raw amino-acid sequence, 139 residues long: MKRGVLLNAPLSALVAQMGHTDEITVCDAGLPIPAGPERIDLALMAGTPNLQTVLKALLTDLVVEKVIMASEIKLISPDTHQALLDQIETHSLEQGKPIAIEYCLHEEFKTRSRQSKAIVRSGEITPYANLILCAGVAF.

His20 acts as the Proton donor in catalysis. Residues Asp28, His106, and Tyr128–Asn130 each bind substrate.

This sequence belongs to the RbsD / FucU family. RbsD subfamily. As to quaternary structure, homodecamer.

It is found in the cytoplasm. The catalysed reaction is beta-D-ribopyranose = beta-D-ribofuranose. The protein operates within carbohydrate metabolism; D-ribose degradation; D-ribose 5-phosphate from beta-D-ribopyranose: step 1/2. Its function is as follows. Catalyzes the interconversion of beta-pyran and beta-furan forms of D-ribose. The chain is D-ribose pyranase from Aeromonas salmonicida (strain A449).